A 322-amino-acid chain; its full sequence is Nodulation protein Z (322 aa).

One can recognise a GT23 domain in the interval 1–314; it reads MYNRYVLSRR…NDPSRLVVIE (314 aa).

The protein belongs to the glycosyltransferase 23 family.

Its function is as follows. Fucosyltransferase which adds the fucose moiety of the nod factor on its terminal reducing N-acetylglucosamine end. Uses GDP-fucose as the donor group. The chain is Nodulation protein Z (nodZ) from Sinorhizobium fredii (strain NBRC 101917 / NGR234).